Here is a 508-residue protein sequence, read N- to C-terminus: MFSQLVVWLLATSTVCLAWDNSWIMDMKYERYSQRRSYYLAEEEDRSVGSDIELTAKEQVVNERLMELKMTELKNGLQDPAGFIPWNHIFDVLYRINSSELFHIIQKMPKGGILHAHDTALCSTDYVISLTYEPNLWQCADPTTGAFQFLFSREAPTNTDTCTWTLVADERAKQGEENYNSALRSQLSMYNTNPIMHNRDVDSIWRQFMGIFGVNGGLLTYAPVWKAYYLQFLKEMFADGVQYLELRTTLPPLYDLDGKTYNEVEIMQIYYDATKEFKKQNPTFIGAKIIYAPVRVVDDAGIPALMAKVRELHEKFPDFMAGFDLVGQEDKGRPLIAFSREILKLPNSIDFYFHAGETNWDGMTDDNLIDAVLLGTKRIGHGYAVLKHPRVLKEVKRNKIAIEVCPASNQVLRLVADYRNHPGSVLLANKEYPVVISSDDPSFWEAKPLSHDFYMAFLGLASSRQDLRLLKQLAINSIKYSAMSPREKLQAMQMWEAEWKKFIDGFNA.

An N-terminal signal peptide occupies residues 1-18 (MFSQLVVWLLATSTVCLA).

The protein belongs to the metallo-dependent hydrolases superfamily. Adenosine and AMP deaminases family. ADGF subfamily. Requires Zn(2+) as cofactor. Salivary gland (at protein level).

The protein localises to the secreted. The catalysed reaction is adenosine + H2O + H(+) = inosine + NH4(+). Functionally, catalyzes the deamination of adenosine to inosine. This chain is Adenosine deaminase, found in Lutzomyia longipalpis (Sand fly).